A 436-amino-acid chain; its full sequence is 3-ketoacyl-CoA thiolase (436 aa).

Catalysis depends on Cys99, which acts as the Acyl-thioester intermediate. Residues His392 and Cys422 each act as proton acceptor in the active site.

Belongs to the thiolase-like superfamily. Thiolase family. As to quaternary structure, heterotetramer of two alpha chains (FadJ) and two beta chains (FadI).

It localises to the cytoplasm. It carries out the reaction an acyl-CoA + acetyl-CoA = a 3-oxoacyl-CoA + CoA. It participates in lipid metabolism; fatty acid beta-oxidation. Catalyzes the final step of fatty acid oxidation in which acetyl-CoA is released and the CoA ester of a fatty acid two carbons shorter is formed. The polypeptide is 3-ketoacyl-CoA thiolase (Salmonella paratyphi C (strain RKS4594)).